The chain runs to 214 residues: Adenylate kinase (214 aa).

Residue 10 to 15 (GAGKGT) coordinates ATP. Positions 30–59 (STGDMFRAALKNQTPLGLKAKEYMDKGELV) are NMP. Residues T31, R36, 57 to 59 (ELV), 85 to 88 (GFPR), and Q92 each bind AMP. The LID stretch occupies residues 126–163 (GRRVCRQCGATYHVKFNPPKVEGVCDACGGELYQRSDD). Position 127 (R127) interacts with ATP. Zn(2+) contacts are provided by C130 and C133. 136-137 (TY) serves as a coordination point for ATP. The Zn(2+) site is built by C150 and C153. AMP-binding residues include R160 and R171. K199 is an ATP binding site.

It belongs to the adenylate kinase family. Monomer.

Its subcellular location is the cytoplasm. The catalysed reaction is AMP + ATP = 2 ADP. It functions in the pathway purine metabolism; AMP biosynthesis via salvage pathway; AMP from ADP: step 1/1. In terms of biological role, catalyzes the reversible transfer of the terminal phosphate group between ATP and AMP. Plays an important role in cellular energy homeostasis and in adenine nucleotide metabolism. The protein is Adenylate kinase of Carboxydothermus hydrogenoformans (strain ATCC BAA-161 / DSM 6008 / Z-2901).